Consider the following 702-residue polypeptide: Elongation factor G (702 aa).

In terms of domain architecture, tr-type G spans 9–292 (DRTRNIGIMA…AVVDYLPSPL (284 aa)). GTP contacts are provided by residues 18 to 25 (AHIDAGKT), 91 to 95 (DTPGH), and 145 to 148 (NKMD).

Belongs to the TRAFAC class translation factor GTPase superfamily. Classic translation factor GTPase family. EF-G/EF-2 subfamily.

Its subcellular location is the cytoplasm. Its function is as follows. Catalyzes the GTP-dependent ribosomal translocation step during translation elongation. During this step, the ribosome changes from the pre-translocational (PRE) to the post-translocational (POST) state as the newly formed A-site-bound peptidyl-tRNA and P-site-bound deacylated tRNA move to the P and E sites, respectively. Catalyzes the coordinated movement of the two tRNA molecules, the mRNA and conformational changes in the ribosome. The polypeptide is Elongation factor G (Oenococcus oeni (strain ATCC BAA-331 / PSU-1)).